Reading from the N-terminus, the 548-residue chain is Splicing factor U2af large subunit B (548 aa).

Positions 1–82 (MADDHAAAAD…DRDRDRDKDR (82 aa)) are enriched in basic and acidic residues. The segment at 1–156 (MADDHAAAAD…SKRVSGFDMA (156 aa)) is disordered. A compositionally biased stretch (basic residues) spans 83–93 (DRHHRHHRERR). Residues 94-120 (EHRDRSDDHDRHRSRDSERRRDHERDG) show a composition bias toward basic and acidic residues. Residues 121–149 (RRRHRSRSRSRSRGRDRRSRSRSRSKSKR) are compositionally biased toward basic residues. RRM domains lie at 214 to 297 (RRVY…RPTD), 334 to 412 (DRIF…RANQ), and 453 to 539 (QVVS…YPEN).

Belongs to the splicing factor SR family.

It is found in the nucleus. Functionally, necessary for the splicing of pre-mRNA. This is Splicing factor U2af large subunit B (U2AF65B) from Oryza sativa subsp. japonica (Rice).